The sequence spans 340 residues: Undecaprenyl-phosphate 4-deoxy-4-formamido-L-arabinose transferase (340 aa).

A run of 2 helical transmembrane segments spans residues 235-255 (LSIV…ALIF) and 269-289 (LFVL…GMGL).

The protein belongs to the glycosyltransferase 2 family.

The protein localises to the cell inner membrane. It catalyses the reaction UDP-4-deoxy-4-formamido-beta-L-arabinose + di-trans,octa-cis-undecaprenyl phosphate = 4-deoxy-4-formamido-alpha-L-arabinopyranosyl di-trans,octa-cis-undecaprenyl phosphate + UDP. It functions in the pathway glycolipid biosynthesis; 4-amino-4-deoxy-alpha-L-arabinose undecaprenyl phosphate biosynthesis; 4-amino-4-deoxy-alpha-L-arabinose undecaprenyl phosphate from UDP-4-deoxy-4-formamido-beta-L-arabinose and undecaprenyl phosphate: step 1/2. Its pathway is bacterial outer membrane biogenesis; lipopolysaccharide biosynthesis. Functionally, catalyzes the transfer of 4-deoxy-4-formamido-L-arabinose from UDP to undecaprenyl phosphate. The modified arabinose is attached to lipid A and is required for resistance to polymyxin and cationic antimicrobial peptides. The sequence is that of Undecaprenyl-phosphate 4-deoxy-4-formamido-L-arabinose transferase from Pseudomonas fluorescens (strain Pf0-1).